A 346-amino-acid chain; its full sequence is Selenide, water dikinase (346 aa).

The active site involves Sec17. A non-standard amino acid (selenocysteine) is located at residue Sec17. ATP is bound by residues Lys20 and 47–49 (TSD). Asp50 contacts Mg(2+). ATP is bound by residues Asp67, Asp90, and 138-140 (GHT). Asp90 is a binding site for Mg(2+). Asp226 lines the Mg(2+) pocket.

This sequence belongs to the selenophosphate synthase 1 family. Class I subfamily. As to quaternary structure, homodimer. It depends on Mg(2+) as a cofactor.

It catalyses the reaction hydrogenselenide + ATP + H2O = selenophosphate + AMP + phosphate + 2 H(+). Functionally, synthesizes selenophosphate from selenide and ATP. In Trichlorobacter lovleyi (strain ATCC BAA-1151 / DSM 17278 / SZ) (Geobacter lovleyi), this protein is Selenide, water dikinase.